We begin with the raw amino-acid sequence, 493 residues long: Keratin, type II cuticular Hb3 (493 aa).

The head stretch occupies residues 1–111 (MTCGFNSIGC…PNAQCVKQEE (111 aa)). The region spanning 111-422 (EKEQIKSLNS…RLLEGEEQRL (312 aa)) is the IF rod domain. Residues 112-146 (KEQIKSLNSRFAAFIDKVRFLEQQNKLLETKLQFY) form a coil 1A region. The linker 1 stretch occupies residues 147 to 156 (QNRECCQSNL). Residues 157 to 257 (EPLFAGYIET…YEEEIRILQS (101 aa)) form a coil 1B region. Lys-217 is covalently cross-linked (Glycyl lysine isopeptide (Lys-Gly) (interchain with G-Cter in SUMO1)). The tract at residues 258–274 (HISDTSVVVKLDNSRDL) is linker 12. The coil 2 stretch occupies residues 275–418 (NMDCIVAEIK…ATYRRLLEGE (144 aa)). Residues 419–493 (EQRLCEGVEA…GGGSCGQGRH (75 aa)) form a tail region.

It belongs to the intermediate filament family. As to quaternary structure, heterotetramer of two type I and two type II keratins. Synthesis begins in the cortex 10-15 cell layers above the apex of the dermal papilla and ends abruptly in the middle of the cortex.

In Homo sapiens (Human), this protein is Keratin, type II cuticular Hb3 (KRT83).